The following is a 323-amino-acid chain: Pathogenicity locus probable regulatory protein WtsA (323 aa).

One can recognise a Sigma-54 factor interaction domain in the interval 41–251; it reads VAPLEIDLVL…ELKTAAKRFT (211 aa). Residues 52-59 and 123-132 each bind ATP; these read GETGTGKD and EIDSMPLSLQ. A DNA-binding region (H-T-H motif) is located at residues 293–312; sequence IDEAAMELGMPLRTLYHRIK.

Positive activator of wtsB involved in plant pathogenicity. Probably interacts with sigma-54. The protein is Pathogenicity locus probable regulatory protein WtsA (wtsA) of Pantoea stewartii subsp. stewartii (Erwinia stewartii).